The chain runs to 359 residues: tRNA-specific 2-thiouridylase MnmA (359 aa).

Residues 7–14 (GLSGGVDS) and L33 each bind ATP. C94 acts as the Nucleophile in catalysis. C94 and C193 form a disulfide bridge. ATP is bound at residue G119. The interval 143-145 (KDQ) is interaction with tRNA. Catalysis depends on C193, which acts as the Cysteine persulfide intermediate. Residues 298–299 (RY) form an interaction with tRNA region.

It belongs to the MnmA/TRMU family.

Its subcellular location is the cytoplasm. The enzyme catalyses S-sulfanyl-L-cysteinyl-[protein] + uridine(34) in tRNA + AH2 + ATP = 2-thiouridine(34) in tRNA + L-cysteinyl-[protein] + A + AMP + diphosphate + H(+). In terms of biological role, catalyzes the 2-thiolation of uridine at the wobble position (U34) of tRNA, leading to the formation of s(2)U34. The polypeptide is tRNA-specific 2-thiouridylase MnmA (Trichodesmium erythraeum (strain IMS101)).